Consider the following 158-residue polypeptide: NAD(P)H-quinone oxidoreductase subunit J, chloroplastic (158 aa).

Belongs to the complex I 30 kDa subunit family. In terms of assembly, NDH is composed of at least 16 different subunits, 5 of which are encoded in the nucleus.

It localises to the plastid. It is found in the chloroplast thylakoid membrane. It carries out the reaction a plastoquinone + NADH + (n+1) H(+)(in) = a plastoquinol + NAD(+) + n H(+)(out). The enzyme catalyses a plastoquinone + NADPH + (n+1) H(+)(in) = a plastoquinol + NADP(+) + n H(+)(out). NDH shuttles electrons from NAD(P)H:plastoquinone, via FMN and iron-sulfur (Fe-S) centers, to quinones in the photosynthetic chain and possibly in a chloroplast respiratory chain. The immediate electron acceptor for the enzyme in this species is believed to be plastoquinone. Couples the redox reaction to proton translocation, and thus conserves the redox energy in a proton gradient. The protein is NAD(P)H-quinone oxidoreductase subunit J, chloroplastic of Cicer arietinum (Chickpea).